A 1176-amino-acid polypeptide reads, in one-letter code: Pesticidal crystal protein Cry1Cb (1176 aa).

The protein belongs to the delta endotoxin family.

Its function is as follows. Promotes colloidosmotic lysis by binding to the midgut epithelial cells of insects. Toxic to Spodoptera exigua and Trichoplusia ni. This chain is Pesticidal crystal protein Cry1Cb (cry1Cb), found in Bacillus thuringiensis subsp. galleriae.